The sequence spans 189 residues: Dihydrofolate reductase (189 aa).

The DHFR domain occupies 3–184 (SLNSIVAVCQ…IQYKFEVYQK (182 aa)). NADP(+) is bound by residues Ala-9 and 15 to 21 (GIGKDGN). Residue 30 to 35 (EYKYFQ) coordinates substrate. 54–56 (KKT) contacts NADP(+). Substrate contacts are provided by Asn-64 and Arg-70. Residues 76–78 (SRE) and 116–123 (GGTAVYKA) each bind NADP(+).

Belongs to the dihydrofolate reductase family.

It carries out the reaction (6S)-5,6,7,8-tetrahydrofolate + NADP(+) = 7,8-dihydrofolate + NADPH + H(+). It participates in cofactor biosynthesis; tetrahydrofolate biosynthesis; 5,6,7,8-tetrahydrofolate from 7,8-dihydrofolate: step 1/1. In terms of biological role, key enzyme in folate metabolism. Contributes to the de novo mitochondrial thymidylate biosynthesis pathway. Catalyzes an essential reaction for de novo glycine and purine synthesis, and for DNA precursor synthesis. May bind to mRNA. The chain is Dihydrofolate reductase (DHFR) from Gallus gallus (Chicken).